Here is a 271-residue protein sequence, read N- to C-terminus: Formamidopyrimidine-DNA glycosylase (271 aa).

Pro-2 functions as the Schiff-base intermediate with DNA in the catalytic mechanism. The active-site Proton donor is Glu-3. Residue Lys-57 is the Proton donor; for beta-elimination activity of the active site. The DNA site is built by His-90, Arg-109, and Lys-151. The FPG-type zinc-finger motif lies at 236 to 270 (HVYGRGGETCTQCGNLLSEIRLGQRTTVFCGICQT). Arg-260 functions as the Proton donor; for delta-elimination activity in the catalytic mechanism.

This sequence belongs to the FPG family. Monomer. Requires Zn(2+) as cofactor.

It carries out the reaction Hydrolysis of DNA containing ring-opened 7-methylguanine residues, releasing 2,6-diamino-4-hydroxy-5-(N-methyl)formamidopyrimidine.. The enzyme catalyses 2'-deoxyribonucleotide-(2'-deoxyribose 5'-phosphate)-2'-deoxyribonucleotide-DNA = a 3'-end 2'-deoxyribonucleotide-(2,3-dehydro-2,3-deoxyribose 5'-phosphate)-DNA + a 5'-end 5'-phospho-2'-deoxyribonucleoside-DNA + H(+). Involved in base excision repair of DNA damaged by oxidation or by mutagenic agents. Acts as a DNA glycosylase that recognizes and removes damaged bases. Has a preference for oxidized purines, such as 7,8-dihydro-8-oxoguanine (8-oxoG). Has AP (apurinic/apyrimidinic) lyase activity and introduces nicks in the DNA strand. Cleaves the DNA backbone by beta-delta elimination to generate a single-strand break at the site of the removed base with both 3'- and 5'-phosphates. This Shewanella sp. (strain MR-7) protein is Formamidopyrimidine-DNA glycosylase.